A 126-amino-acid polypeptide reads, in one-letter code: Histone H2B 1.2 (126 aa).

Low complexity predominate over residues 1-12 (MPEPAKSAPAPK). Residues 1 to 35 (MPEPAKSAPAPKKGSKKAVTKTPKKDGKKRRKSRK) are disordered. An N6-acetyllysine mark is found at Lys6 and Lys13. Ser15 is subject to Phosphoserine. An N6-acetyllysine mark is found at Lys16 and Lys21. Ser113 carries an O-linked (GlcNAc) serine glycan. Lys121 participates in a covalent cross-link: Glycyl lysine isopeptide (Lys-Gly) (interchain with G-Cter in ubiquitin).

This sequence belongs to the histone H2B family. The nucleosome is a histone octamer containing two molecules each of H2A, H2B, H3 and H4 assembled in one H3-H4 heterotetramer and two H2A-H2B heterodimers. The octamer wraps approximately 147 bp of DNA. Post-translationally, monoubiquitination of Lys-121 by BRE1 gives a specific tag for epigenetic transcriptional activation and is also prerequisite for histone H3 'Lys-4' and 'Lys-79' methylation. Phosphorylated on Ser-15 during developmentally programmed apoptosis; which may facilitate apoptotic chromatin condensation. In terms of processing, glcNAcylation at Ser-113 promotes monoubiquitination of Lys-121. It fluctuates in response to extracellular glucose, and associates with transcribed genes.

It localises to the nucleus. The protein localises to the chromosome. Core component of nucleosome. Nucleosomes wrap and compact DNA into chromatin, limiting DNA accessibility to the cellular machineries which require DNA as a template. Histones thereby play a central role in transcription regulation, DNA repair, DNA replication and chromosomal stability. DNA accessibility is regulated via a complex set of post-translational modifications of histones, also called histone code, and nucleosome remodeling. This is Histone H2B 1.2 from Xenopus laevis (African clawed frog).